Consider the following 67-residue polypeptide: Large ribosomal subunit protein bL35 (67 aa).

Belongs to the bacterial ribosomal protein bL35 family.

This Rhizobium johnstonii (strain DSM 114642 / LMG 32736 / 3841) (Rhizobium leguminosarum bv. viciae) protein is Large ribosomal subunit protein bL35.